We begin with the raw amino-acid sequence, 88 residues long: Protein A19 homolog (88 aa).

Positions 1-28 are disordered; that stretch reads MADSTAGAKKRKKRSTSATSTRKEPPTV.

It belongs to the chordopoxvirinae A19 family.

The chain is Protein A19 homolog from Fowlpox virus (strain NVSL) (FPV).